The primary structure comprises 161 residues: Endoribonuclease YbeY (161 aa).

3 residues coordinate Zn(2+): histidine 120, histidine 124, and aspartate 130.

This sequence belongs to the endoribonuclease YbeY family. It depends on Zn(2+) as a cofactor.

Its subcellular location is the cytoplasm. Single strand-specific metallo-endoribonuclease involved in late-stage 70S ribosome quality control and in maturation of the 3' terminus of the 16S rRNA. The polypeptide is Endoribonuclease YbeY (Chlamydia trachomatis serovar L2 (strain ATCC VR-902B / DSM 19102 / 434/Bu)).